Here is a 428-residue protein sequence, read N- to C-terminus: MSSVVVVGTQWGDEGKGKITDFLSENAEVIARYQGGNNAGHTIVFNGEKYKLHLIPSGIFYKDKICVIGNGMVVDPKALVAELKYLHDRGISTDNLRISNRAHVILPYHLKLDELEEERKGANKIGTTKKGIGPAYMDKAARVGIRIVDLLDREVFEEKLARNLQEKNVLFEKVYGVEGFKLEDILDEYYEYGQQIAKYVCDTSVVLNNALDEGRRVLFEGAQGVMLDIDQGTYPFVTSSNPVAGGVTIGAGVGPTKIKHVVGVAKAYTTRVGDGPFPTELHDEIGDRIREVGREYGTTTGRPRRVGWFDSVVVRHARRVSGITDLSLNSIDVLTGIETLKICVAYRYKGKVIEEFPASLKVLAECEPIYEELPGWSEDITGVKSLDELPVNARHYVERISQLTGIPLSIFSVGPDRSQTNVVRSVYA.

GTP contacts are provided by residues 12–18 and 40–42; these read GDEGKGK and GHT. The Proton acceptor role is filled by Asp13. Residues Asp13 and Gly40 each coordinate Mg(2+). Residues 13-16, 38-41, Thr128, Arg142, Gln223, Thr238, and Arg302 each bind IMP; these read DEGK and NAGH. The active-site Proton donor is the His41. 298–304 is a binding site for substrate; that stretch reads TTTGRPR. Residues Arg304, 330-332, and 412-414 contribute to the GTP site; these read SID and SVG.

Belongs to the adenylosuccinate synthetase family. Homodimer. It depends on Mg(2+) as a cofactor.

It localises to the cytoplasm. The catalysed reaction is IMP + L-aspartate + GTP = N(6)-(1,2-dicarboxyethyl)-AMP + GDP + phosphate + 2 H(+). The protein operates within purine metabolism; AMP biosynthesis via de novo pathway; AMP from IMP: step 1/2. Its function is as follows. Plays an important role in the de novo pathway of purine nucleotide biosynthesis. Catalyzes the first committed step in the biosynthesis of AMP from IMP. In Geobacillus sp. (strain WCH70), this protein is Adenylosuccinate synthetase.